Consider the following 301-residue polypeptide: UDP-N-acetylenolpyruvoylglucosamine reductase (301 aa).

One can recognise an FAD-binding PCMH-type domain in the interval 30-194 (VGGEADYLVF…LSVKFALAPG (165 aa)). The active site involves arginine 173. Serine 223 acts as the Proton donor in catalysis. Glutamate 293 is a catalytic residue.

Belongs to the MurB family. The cofactor is FAD.

It is found in the cytoplasm. The catalysed reaction is UDP-N-acetyl-alpha-D-muramate + NADP(+) = UDP-N-acetyl-3-O-(1-carboxyvinyl)-alpha-D-glucosamine + NADPH + H(+). Its pathway is cell wall biogenesis; peptidoglycan biosynthesis. Its function is as follows. Cell wall formation. The chain is UDP-N-acetylenolpyruvoylglucosamine reductase from Streptococcus pneumoniae (strain JJA).